A 92-amino-acid polypeptide reads, in one-letter code: Large ribosomal subunit protein bL27 (92 aa).

A propeptide spanning residues 1–9 (MLKLNLQFF) is cleaved from the precursor. The interval 14 to 34 (GVGSTKNGRDSQSKRLGAKRA) is disordered.

This sequence belongs to the bacterial ribosomal protein bL27 family. In terms of processing, the N-terminus is cleaved by ribosomal processing cysteine protease Prp.

The chain is Large ribosomal subunit protein bL27 from Exiguobacterium sibiricum (strain DSM 17290 / CCUG 55495 / CIP 109462 / JCM 13490 / 255-15).